A 424-amino-acid chain; its full sequence is Enolase (424 aa).

Residue glutamine 162 participates in (2R)-2-phosphoglycerate binding. Glutamate 204 (proton donor) is an active-site residue. Positions 241, 284, and 311 each coordinate Mg(2+). (2R)-2-phosphoglycerate contacts are provided by lysine 336, arginine 365, serine 366, and lysine 387. Lysine 336 acts as the Proton acceptor in catalysis.

This sequence belongs to the enolase family. Requires Mg(2+) as cofactor.

It is found in the cytoplasm. It localises to the secreted. The protein resides in the cell surface. It carries out the reaction (2R)-2-phosphoglycerate = phosphoenolpyruvate + H2O. It functions in the pathway carbohydrate degradation; glycolysis; pyruvate from D-glyceraldehyde 3-phosphate: step 4/5. In terms of biological role, catalyzes the reversible conversion of 2-phosphoglycerate (2-PG) into phosphoenolpyruvate (PEP). It is essential for the degradation of carbohydrates via glycolysis. This chain is Enolase, found in Chelativorans sp. (strain BNC1).